A 193-amino-acid chain; its full sequence is dCTP deaminase (193 aa).

DCTP is bound by residues 110 to 115 (RSSLAR), Asp-128, 136 to 138 (VLE), Tyr-171, Lys-178, and Gln-182. Glu-138 acts as the Proton donor/acceptor in catalysis. The disordered stretch occupies residues 168-193 (DRPYNRRQDAKYKNQQGAVSSRIDED). Residues 170-179 (PYNRRQDAKY) are compositionally biased toward basic and acidic residues.

Belongs to the dCTP deaminase family. Homotrimer.

It carries out the reaction dCTP + H2O + H(+) = dUTP + NH4(+). It participates in pyrimidine metabolism; dUMP biosynthesis; dUMP from dCTP (dUTP route): step 1/2. Its function is as follows. Catalyzes the deamination of dCTP to dUTP. The protein is dCTP deaminase of Photorhabdus laumondii subsp. laumondii (strain DSM 15139 / CIP 105565 / TT01) (Photorhabdus luminescens subsp. laumondii).